The sequence spans 205 residues: Cytochrome c biogenesis ATP-binding export protein CcmA 2 (205 aa).

The region spanning 2 to 205 (LEARDLHCER…LALTGGEAGL (204 aa)) is the ABC transporter domain. 34–41 (GGNGAGKT) is an ATP binding site.

It belongs to the ABC transporter superfamily. CcmA exporter (TC 3.A.1.107) family. As to quaternary structure, the complex is composed of two ATP-binding proteins (CcmA) and two transmembrane proteins (CcmB).

It is found in the cell inner membrane. The enzyme catalyses heme b(in) + ATP + H2O = heme b(out) + ADP + phosphate + H(+). In terms of biological role, part of the ABC transporter complex CcmAB involved in the biogenesis of c-type cytochromes; once thought to export heme, this seems not to be the case, but its exact role is uncertain. Responsible for energy coupling to the transport system. The polypeptide is Cytochrome c biogenesis ATP-binding export protein CcmA 2 (Salmonella paratyphi A (strain ATCC 9150 / SARB42)).